A 76-amino-acid polypeptide reads, in one-letter code: DNA-directed RNA polymerase subunit epsilon (76 aa).

This sequence belongs to the RNA polymerase subunit epsilon family. In terms of assembly, RNAP is composed of a core of 2 alpha, a beta and a beta' subunit. The core is associated with a delta subunit, and at least one of epsilon or omega. When a sigma factor is associated with the core the holoenzyme is formed, which can initiate transcription.

It catalyses the reaction RNA(n) + a ribonucleoside 5'-triphosphate = RNA(n+1) + diphosphate. Functionally, a non-essential component of RNA polymerase (RNAP). This chain is DNA-directed RNA polymerase subunit epsilon, found in Streptococcus thermophilus (strain CNRZ 1066).